The primary structure comprises 103 residues: Large ribosomal subunit protein bL21 (103 aa).

The protein belongs to the bacterial ribosomal protein bL21 family. Part of the 50S ribosomal subunit. Contacts protein L20.

Functionally, this protein binds to 23S rRNA in the presence of protein L20. The sequence is that of Large ribosomal subunit protein bL21 from Salmonella paratyphi A (strain ATCC 9150 / SARB42).